Here is a 210-residue protein sequence, read N- to C-terminus: Thymidylate kinase (210 aa).

11-18 (GGEGAGKT) provides a ligand contact to ATP.

This sequence belongs to the thymidylate kinase family.

The catalysed reaction is dTMP + ATP = dTDP + ADP. Its function is as follows. Phosphorylation of dTMP to form dTDP in both de novo and salvage pathways of dTTP synthesis. The protein is Thymidylate kinase (tmk) of Halalkalibacterium halodurans (strain ATCC BAA-125 / DSM 18197 / FERM 7344 / JCM 9153 / C-125) (Bacillus halodurans).